Here is a 235-residue protein sequence, read N- to C-terminus: Segregation and condensation protein A (235 aa).

It belongs to the ScpA family. As to quaternary structure, component of a cohesin-like complex composed of ScpA, ScpB and the Smc homodimer, in which ScpA and ScpB bind to the head domain of Smc. The presence of the three proteins is required for the association of the complex with DNA.

It is found in the cytoplasm. In terms of biological role, participates in chromosomal partition during cell division. May act via the formation of a condensin-like complex containing Smc and ScpB that pull DNA away from mid-cell into both cell halves. This Streptococcus agalactiae serotype III (strain NEM316) protein is Segregation and condensation protein A.